The primary structure comprises 185 residues: Ribosome-recycling factor (185 aa).

The protein belongs to the RRF family.

The protein resides in the cytoplasm. Its function is as follows. Responsible for the release of ribosomes from messenger RNA at the termination of protein biosynthesis. May increase the efficiency of translation by recycling ribosomes from one round of translation to another. The sequence is that of Ribosome-recycling factor from Pseudomonas fluorescens (strain SBW25).